The following is a 204-amino-acid chain: MGAPLAVALGALHYLALFLQLGGATRPAGHAPWDNHVSGHALFTETPHDMTARTGEDVEMACSFRGSGSPSYSLEIQWWYVRSHRDWTDKQAWASNQLKASQQEDAGKEATKISVVKVVGSNISHKLRLSRVKPTDEGTYECRVIDFSDGKARHHKVKAYLRVQPGENSVLHLPEAPPAAPAPPPPKPGKELRKRSVDQEACSL.

An N-terminal signal peptide occupies residues 1–24 (MGAPLAVALGALHYLALFLQLGGA). Residues 41–158 (ALFTETPHDM…DGKARHHKVK (118 aa)) form the Ig-like domain. The cysteines at positions 62 and 142 are disulfide-linked. Residues 168-204 (NSVLHLPEAPPAAPAPPPPKPGKELRKRSVDQEACSL) form a disordered region. Over residues 175–187 (EAPPAAPAPPPPK) the composition is skewed to pro residues. A compositionally biased stretch (basic and acidic residues) spans 188-198 (PGKELRKRSVD).

This Homo sapiens (Human) protein is V-set and transmembrane domain-containing protein 2-like protein (VSTM2L).